Consider the following 289-residue polypeptide: Rhodopsin (289 aa).

Residues Y1–A7 are Extracellular-facing. Residues Y8 to V32 form a helical membrane-spanning segment. The Cytoplasmic portion of the chain corresponds to T33–N44. The chain crosses the membrane as a helical span at residues Y45–Y67. Topologically, residues T68 to C81 are extracellular. An intrachain disulfide couples C81 to C158. Residues N82–I104 traverse the membrane as a helical segment. The short motif at E105–W107 is the 'Ionic lock' involved in activated form stabilization element. Over E105–H123 the chain is Cytoplasmic. A helical membrane pass occupies residues A124–V144. At G145–S173 the chain is on the extracellular side. N-linked (GlcNAc...) asparagine glycosylation is present at N171. The chain crosses the membrane as a helical span at residues F174 to G195. At R196–R223 the chain is on the cytoplasmic side. A helical membrane pass occupies residues M224 to W245. Topologically, residues I246–I257 are extracellular. A helical transmembrane segment spans residues F258–C279. N6-(retinylidene)lysine is present on K267. Topologically, residues M280–I289 are cytoplasmic.

Belongs to the G-protein coupled receptor 1 family. Opsin subfamily. Post-translationally, phosphorylated on some or all of the serine and threonine residues present in the C-terminal region. In terms of processing, contains one covalently linked retinal chromophore.

It is found in the membrane. Its subcellular location is the cell projection. It localises to the cilium. The protein resides in the photoreceptor outer segment. In terms of biological role, photoreceptor required for image-forming vision at low light intensity. While most salt water fish species use retinal as chromophore, most freshwater fish use 3-dehydroretinal, or a mixture of retinal and 3-dehydroretinal. Light-induced isomerization of 11-cis to all-trans retinal triggers a conformational change that activates signaling via G-proteins. Subsequent receptor phosphorylation mediates displacement of the bound G-protein alpha subunit by arrestin and terminates signaling. In Abyssocottus korotneffi (Baikalian deep-water sculpin), this protein is Rhodopsin (rho).